We begin with the raw amino-acid sequence, 345 residues long: Ferrochelatase (345 aa).

Fe cation is bound by residues H215 and E296.

The protein belongs to the ferrochelatase family.

It is found in the cytoplasm. It carries out the reaction heme b + 2 H(+) = protoporphyrin IX + Fe(2+). It functions in the pathway porphyrin-containing compound metabolism; protoheme biosynthesis; protoheme from protoporphyrin-IX: step 1/1. Catalyzes the ferrous insertion into protoporphyrin IX. The polypeptide is Ferrochelatase (Rhodopseudomonas palustris (strain HaA2)).